The sequence spans 72 residues: uncharacterized protein (72 aa).

Residues 23–45 (ITNLLITTILLCFFNATTYWKLF) traverse the membrane as a helical segment.

The protein localises to the membrane. This is an uncharacterized protein from Schizosaccharomyces pombe (strain 972 / ATCC 24843) (Fission yeast).